Consider the following 553-residue polypeptide: 5'-nucleotidase (553 aa).

A signal peptide spans 1–21; that stretch reads MKQGLILKSVLSAAIIASLAG. C22 carries N-palmitoyl cysteine lipidation. C22 is lipidated: S-diacylglycerol cysteine. Positions 45, 47, 88, 120, 221, 256, and 258 each coordinate a divalent metal cation. Substrate-binding positions include F432 and 501–507; that span reads FNAAGGD.

This sequence belongs to the 5'-nucleotidase family. Chloride is required as a cofactor. Mg(2+) serves as cofactor.

Its subcellular location is the cell outer membrane. It carries out the reaction a ribonucleoside 5'-phosphate + H2O = a ribonucleoside + phosphate. In terms of biological role, degradation of extracellular 5'-nucleotides for nutritional needs. In Vibrio cholerae serotype O1 (strain ATCC 39315 / El Tor Inaba N16961), this protein is 5'-nucleotidase (nutA).